We begin with the raw amino-acid sequence, 2431 residues long: Reducing polyketide synthase rads1 (2431 aa).

The Ketosynthase family 3 (KS3) domain occupies 10-440 (RAPIAIIGLA…GTNAHIVLER (431 aa)). Residues C184, H319, and H363 each act as for beta-ketoacyl synthase activity in the active site. The tract at residues 558 to 895 (FVFTGQGAQW…NLAAELFRRG (338 aa)) is malonyl-CoA:ACP transacylase (MAT) domain. Residues 944-1080 (KSILGAELPS…GLISIAYEDT (137 aa)) are N-terminal hotdog fold. The PKS/mFAS DH domain occupies 944–1267 (KSILGAELPS…LAELEVDDAA (324 aa)). Residues 946–1264 (ILGAELPSMD…DFRLAELEVD (319 aa)) form a dehydratase (DH) domain region. H976 serves as the catalytic Proton acceptor; for dehydratase activity. Residues 1108–1267 (PETCSKERFY…LAELEVDDAA (160 aa)) form a C-terminal hotdog fold region. The active-site Proton donor; for dehydratase activity is D1174. Residues 1705–2023 (GLLNTLHFVP…QGKHLGKMIL (319 aa)) form an enoyl reductase (ER) domain region. C1822 functions as the Phosphocysteine intermediate in the catalytic mechanism. Residues 2048 to 2228 (ATYLIVGGLG…VSVNLGIMRD (181 aa)) are ketoreductase (KR) domain. A Carrier domain is found at 2346 to 2423 (VAAAIITEAL…TFAVQIAKKS (78 aa)). S2383 is modified (O-(pantetheine 4'-phosphoryl)serine).

The protein operates within secondary metabolite biosynthesis. Functionally, reducing polyketide synthase; part of the gene cluster that mediates the biosynthesis of radicicol, a resorcylic acid lactone (RAL) that irreversibly inhibits the HSP90 molecular chaperone, an important target for cancer chemotherapy. The cluster encodes only two apparent post-PKS enzymes, a cytochrome P450 monooxygenase (radP) and a non-heme halogenase (radH) that introduce the epoxide and the chlorine, respectively. If this cluster includes all the genes required for radicicol biosynthesis, the remaining structural features of radicicol are presumably generated by the PKSs rads1 and rads2. The C-2' ketone could arise if the R-PKS rads1 and NR-PKS rads2 each carry out four iterations, in contrast to the five iteration-three iteration split for the hypothemycin PKSs. The origin of the cis 5',6' double bond is not known. The radicicol R-PKS radS1 ER domain may catalyze either double bond isomerization or reduction in the third iteration. The protein is Reducing polyketide synthase rads1 of Floropilus chiversii (Chaetomium chiversii).